A 521-amino-acid chain; its full sequence is Cytochrome P450 1A1 (521 aa).

Residue Phe229 coordinates substrate. Residue Cys463 coordinates heme.

This sequence belongs to the cytochrome P450 family. The cofactor is heme.

It localises to the endoplasmic reticulum membrane. It is found in the microsome membrane. The enzyme catalyses an organic molecule + reduced [NADPH--hemoprotein reductase] + O2 = an alcohol + oxidized [NADPH--hemoprotein reductase] + H2O + H(+). In terms of biological role, cytochromes P450 are a group of heme-thiolate monooxygenases. They oxidize a variety of structurally unrelated compounds, including steroids, fatty acids, and xenobiotics. This Opsanus tau (Oyster toadfish) protein is Cytochrome P450 1A1 (cyp1a1).